Here is a 225-residue protein sequence, read N- to C-terminus: UPF0173 metal-dependent hydrolase PAE2160 (225 aa).

Belongs to the UPF0173 family.

The sequence is that of UPF0173 metal-dependent hydrolase PAE2160 from Pyrobaculum aerophilum (strain ATCC 51768 / DSM 7523 / JCM 9630 / CIP 104966 / NBRC 100827 / IM2).